The chain runs to 410 residues: Protein LTV1 homolog (410 aa).

Disordered stretches follow at residues 142-165 (VYRSTRRGEDSEEEEDDDEDDEMY) and 325-378 (EMDI…ARKL). 2 stretches are compositionally biased toward acidic residues: residues 151–165 (DSEEEEDDDEDDEMY) and 325–345 (EMDIAEEDEDDDEDMEDDDDK). The span at 357–366 (PKNETPEQRS) shows a compositional bias: basic and acidic residues. A coiled-coil region spans residues 363–389 (EQRSLRKKAVKEARKLRRVEKKANKTM). Residues 367-378 (LRKKAVKEARKL) show a composition bias toward basic residues.

It belongs to the LTV1 family.

This chain is Protein LTV1 homolog, found in Caenorhabditis elegans.